Here is a 418-residue protein sequence, read N- to C-terminus: Gamma-glutamyl phosphate reductase (418 aa).

Belongs to the gamma-glutamyl phosphate reductase family.

The protein resides in the cytoplasm. It catalyses the reaction L-glutamate 5-semialdehyde + phosphate + NADP(+) = L-glutamyl 5-phosphate + NADPH + H(+). It functions in the pathway amino-acid biosynthesis; L-proline biosynthesis; L-glutamate 5-semialdehyde from L-glutamate: step 2/2. In terms of biological role, catalyzes the NADPH-dependent reduction of L-glutamate 5-phosphate into L-glutamate 5-semialdehyde and phosphate. The product spontaneously undergoes cyclization to form 1-pyrroline-5-carboxylate. The chain is Gamma-glutamyl phosphate reductase from Halothermothrix orenii (strain H 168 / OCM 544 / DSM 9562).